The following is a 954-amino-acid chain: E3 ubiquitin-protein ligase arkadia (954 aa).

Positions 50–66 (LCSDTNKQQRDLNSNGT) are enriched in polar residues. 2 disordered regions span residues 50–175 (LCSD…VSSL) and 193–276 (RKRF…SGGM). Composition is skewed to low complexity over residues 112–131 (SSFSDCISSPSSSSHFGDSD) and 232–251 (SSSSSSENDLSSESSSSSST). Positions 280–284 (VVVIE) match the SUMO interaction motif 1 (SIM) motif. An SUMO interaction motif 2 (SIM) motif is present at residues 305-311 (EVEIVTV). 3 disordered regions span residues 318-346 (RTTLGHPRSHWGQNTQSGRTQEQRTRNRV), 364-452 (TVDE…MPRL), and 485-509 (HFPHHHHHHHQSSHPGVPLSPSFRD). Polar residues predominate over residues 328-337 (WGQNTQSGRT). Positions 360-364 (VVDLT) match the SUMO interaction motif 3 (SIM) motif. Low complexity predominate over residues 385–395 (VSTVSSNTSTS). The segment covering 485–496 (HFPHHHHHHHQS) has biased composition (basic residues). The interval 867–869 (YPH) is ubiquitin binding. Residues Cys-902 and Cys-905 each coordinate Zn(2+). Residues 902-943 (CTICLSILEEGEDVRRLPCMHLFHQVCVDQWLITNKKCPICR) form an RING-type; atypical zinc finger. The tract at residues 917-921 (RLPCM) is ubiquitin binding. Zn(2+)-binding residues include His-925 and Cys-928.

It belongs to the Arkadia family. Monomer.

The protein resides in the nucleus. Its subcellular location is the cytoplasm. It localises to the PML body. The catalysed reaction is S-ubiquitinyl-[E2 ubiquitin-conjugating enzyme]-L-cysteine + [acceptor protein]-L-lysine = [E2 ubiquitin-conjugating enzyme]-L-cysteine + N(6)-ubiquitinyl-[acceptor protein]-L-lysine.. It functions in the pathway protein modification; protein ubiquitination. With respect to regulation, binds free ubiquitin non-covalently via its RING-type zinc finger. Ubiquitin-binding leads to enhance the E3 ubiquitin-protein ligase activity by stabilizing the ubiquitin-conjugating enzyme E2 (donor ubiquitin) in the 'closed' conformation and activating ubiquitin transfer. In terms of biological role, E3 ubiquitin-protein ligase required for mesoderm patterning during embryonic development. Acts as an enhancer of the transcriptional responses of the smad2/smad3 effectors, which are activated downstream of BMP. Acts by mediating ubiquitination and degradation of SMAD inhibitors such as smad7, inducing their proteasomal degradation and thereby enhancing the transcriptional activity of TGF-beta and BMP. Specifically binds polysumoylated chains via SUMO interaction motifs (SIMs) and mediates ubiquitination of sumoylated substrates. The regulation of the BMP-SMAD signaling is however independent of sumoylation and is not dependent of SUMO interaction motifs (SIMs). The polypeptide is E3 ubiquitin-protein ligase arkadia (rnf111) (Xenopus tropicalis (Western clawed frog)).